Here is a 525-residue protein sequence, read N- to C-terminus: Bifunctional purine biosynthesis protein PurH (525 aa).

Residues 1 to 149 (MSDPVIKRAL…KNNESVTVVT (149 aa)) enclose the MGS-like domain.

The protein belongs to the PurH family.

The catalysed reaction is (6R)-10-formyltetrahydrofolate + 5-amino-1-(5-phospho-beta-D-ribosyl)imidazole-4-carboxamide = 5-formamido-1-(5-phospho-D-ribosyl)imidazole-4-carboxamide + (6S)-5,6,7,8-tetrahydrofolate. It catalyses the reaction IMP + H2O = 5-formamido-1-(5-phospho-D-ribosyl)imidazole-4-carboxamide. The protein operates within purine metabolism; IMP biosynthesis via de novo pathway; 5-formamido-1-(5-phospho-D-ribosyl)imidazole-4-carboxamide from 5-amino-1-(5-phospho-D-ribosyl)imidazole-4-carboxamide (10-formyl THF route): step 1/1. It functions in the pathway purine metabolism; IMP biosynthesis via de novo pathway; IMP from 5-formamido-1-(5-phospho-D-ribosyl)imidazole-4-carboxamide: step 1/1. This is Bifunctional purine biosynthesis protein PurH from Pelodictyon phaeoclathratiforme (strain DSM 5477 / BU-1).